Reading from the N-terminus, the 814-residue chain is MTSFQEVQLQTSNFAHVIFQNVAKSYLPNAHLECHYTLTPYIHPHSKDWVGIFKVGWSTARDYYTFLWSPMPEHYVEGSTVNCVLAFQGYYLPNDDGEFYQFCYVTHKGEIRGASTPFQFRAASPVEELLTMEDEGNSDMLVVTTKAGLLELKIEKTLKEKEELLKLIAVLEKETAQLREQVGRMERELSQEKGRCEQLQAEQKGLLEVSQSLRVENEEFMKRYSDATAKVQQLEEDIVSVTHKAIEKETDLDSLKDKLRKAQHEREQLECQLQTEKDEKELYKVHLKNTEIENTKLVSEIQTLKNLDGNKESMITHFKEEISKLQSCLADKENLYRALLLTTSNKEDTLFLKEQLRKAEEQVQATRQELIFLTKELSDAVNVRDKTMADLHTARLENERVKKQLADTLAELQLHAVKKDQEKTDTLEHELRREVEDLKLRLQMAADHYREKFKECQRLQKQINKLSDQAASTNSVFTKKMGSQQKVNDASINTDPAASTSASAVDVKPAASCAETGFDMSTKDHVCEMTKEIAEKIEKYNKCKQLLQDEKTKCNKYAEELAKMELKWKEQVKIAENVKLELAEVEDNYKVQLAEKEKEINGLASYLENLSREKELTKSLEDQKGRKLEGQSPQQVSRCLNTCSEQNGLLPPLSSAQPVLQYGNPYSAQETRDGADGAFYPDEIQRPPVRVPSWEDNVVCSQPARNLSRPDGLEDPEDSREDENVPIPPDPANQHLRSHGAGFCFDSSFDVHKKCPLCELMFPPNYDQTKFEEHVESHWKVCPMCSEQFPPDYDQQGFERHVQTHFDQNVLNFD.

Phosphoserine occurs at positions 124, 138, and 225. Positions 144 to 623 form a coiled coil; sequence TTKAGLLELK…KELTKSLEDQ (480 aa). Positions 320-420 are oligomerization; sequence EEISKLQSCL…ELQLHAVKKD (101 aa). At S619 the chain carries Phosphoserine; by IKKA. Position 632 is a phosphoserine (S632). At S693 the chain carries Phosphoserine; by IKKA. Residues 701–733 are disordered; it reads SQPARNLSRPDGLEDPEDSREDENVPIPPDPAN. UBZ1-type zinc fingers lie at residues 752-778 and 779-805; these read HKKCPLCELMFPPNYDQTKFEEHVESH and WKVCPMCSEQFPPDYDQQGFERHVQTH. C755, C758, H774, H778, C782, C785, H801, and H805 together coordinate Zn(2+).

Homooligomer. Interacts with TNFAIP3. Interacts with STARD13. Interacts with MYO6. Interacts with TOM1; the interaction is indirect and is mediated by MYO6, which acts as a bridge between TOM1 and TAX1BP1. Interacts with MAVS; this interaction induces MAVS polyubiquitination. Interacts with TNIP1. Interacts with TRAF6; this interaction mediates deubiquitination of TRAF6 and inhibition of NF-kappa-B activation. Interacts with RIPK1; this interaction negatively regulates RIPK1 ubiquitination. Interacts with NBR1. Interacts with TBK1. Interacts with RB1CC1. Interacts with SQSTM1. Interacts with AZI2. Interacts with TICAM1 and TRIM32; these interactions target TICAM1 to TAX1BP1-mediated selective autophagic degradation. In terms of processing, phosphorylated in the C-terminal region by CHUK/IKKA leading to NF-kappa-B signaling down-regulation.

It localises to the cytoplasm. It is found in the mitochondrion. The protein localises to the preautophagosomal structure. The protein resides in the cytoplasmic vesicle. Its subcellular location is the autophagosome. In terms of biological role, ubiquitin-binding adapter that participates in inflammatory, antiviral and innate immune processes as well as selective autophagy regulation. Plays a key role in the negative regulation of NF-kappa-B and IRF3 signalings by acting as an adapter for the ubiquitin-editing enzyme A20/TNFAIP3 to bind and inactivate its substrates. Disrupts the interactions between the E3 ubiquitin ligase TRAF3 and TBK1/IKBKE to attenuate 'Lys63'-linked polyubiquitination of TBK1 and thereby IFN-beta production. Also recruits A20/TNFAIP3 to ubiquitinated signaling proteins TRAF6 and RIPK1, leading to their deubiquitination and disruption of IL-1 and TNF-induced NF-kappa-B signaling pathways. Inhibits virus-induced apoptosis by inducing the 'Lys-48'-linked polyubiquitination and degradation of MAVS via recruitment of the E3 ligase ITCH, thereby attenuating MAVS-mediated apoptosis signaling. As a macroautophagy/autophagy receptor, facilitates the xenophagic clearance of pathogenic bacteria such as Salmonella typhimurium and Mycobacterium tuberculosis. Upon NBR1 recruitment to the SQSTM1-ubiquitin condensates, acts as the major recruiter of RB1CC1 to these ubiquitin condensates to promote their autophagic degradation. Mediates the autophagic degradation of other substrates including TICAM1. The protein is Tax1-binding protein 1 homolog (Tax1bp1) of Mus musculus (Mouse).